We begin with the raw amino-acid sequence, 237 residues long: D-aminoacyl-tRNA deacylase (237 aa).

This sequence belongs to the DtdA deacylase family. Monomer. It depends on Zn(2+) as a cofactor.

It carries out the reaction a D-aminoacyl-tRNA + H2O = a tRNA + a D-alpha-amino acid + H(+). It catalyses the reaction glycyl-tRNA(Ala) + H2O = tRNA(Ala) + glycine + H(+). In terms of biological role, D-aminoacyl-tRNA deacylase with broad substrate specificity. By recycling D-aminoacyl-tRNA to D-amino acids and free tRNA molecules, this enzyme counteracts the toxicity associated with the formation of D-aminoacyl-tRNA entities in vivo. The protein is D-aminoacyl-tRNA deacylase of Saccharolobus islandicus (strain Y.N.15.51 / Yellowstone #2) (Sulfolobus islandicus).